Here is a 453-residue protein sequence, read N- to C-terminus: Na(+)/H(+) antiporter NhaA (453 aa).

11 helical membrane-spanning segments follow: residues 28 to 48 (FLHI…AALI), 79 to 99 (LHFL…GMEI), 115 to 135 (ALPL…YFIL), 144 to 164 (GWAV…ALLG), 173 to 193 (VFLL…IAVF), 196 to 216 (GGMD…VLGM), 241 to 261 (TGAH…VFAP), 321 to 341 (VAFG…LDGI), 355 to 375 (VLIA…FLMV), 393 to 413 (LVGL…TLAF), and 424 to 444 (LGIL…GFFQ).

This sequence belongs to the NhaA Na(+)/H(+) (TC 2.A.33) antiporter family.

Its subcellular location is the cell inner membrane. It catalyses the reaction Na(+)(in) + 2 H(+)(out) = Na(+)(out) + 2 H(+)(in). Functionally, na(+)/H(+) antiporter that extrudes sodium in exchange for external protons. The protein is Na(+)/H(+) antiporter NhaA of Janthinobacterium sp. (strain Marseille) (Minibacterium massiliensis).